The primary structure comprises 286 residues: Ribosomal RNA small subunit methyltransferase H (286 aa).

S-adenosyl-L-methionine-binding positions include 25–27 (GGH), aspartate 45, leucine 79, aspartate 93, and glutamine 100.

This sequence belongs to the methyltransferase superfamily. RsmH family.

It localises to the cytoplasm. The enzyme catalyses cytidine(1402) in 16S rRNA + S-adenosyl-L-methionine = N(4)-methylcytidine(1402) in 16S rRNA + S-adenosyl-L-homocysteine + H(+). Its function is as follows. Specifically methylates the N4 position of cytidine in position 1402 (C1402) of 16S rRNA. The protein is Ribosomal RNA small subunit methyltransferase H of Petrotoga mobilis (strain DSM 10674 / SJ95).